The primary structure comprises 195 residues: Pyruvoyl-dependent arginine decarboxylase AaxB (195 aa).

Residue Ser-53 is modified to Pyruvic acid (Ser).

It belongs to the pyruvoyl-dependent arginine decarboxylase family. In terms of assembly, trimer of an alpha-beta dimer. Requires pyruvate as cofactor.

It is found in the cytoplasm. The enzyme catalyses L-arginine + H(+) = agmatine + CO2. In terms of biological role, part of the AaxABC system, catalyzes the decarboxylation of L-arginine. The arginine uptake by the bacterium in the macrophage may be a virulence factor against the host innate immune response. In Chlamydia trachomatis serovar L2 (strain ATCC VR-902B / DSM 19102 / 434/Bu), this protein is Pyruvoyl-dependent arginine decarboxylase AaxB (aaxB).